Consider the following 1105-residue polypeptide: Ran-binding protein 6 (1105 aa).

A2 is subject to N-acetylalanine. HEAT repeat units follow at residues 219 to 257 (FKDF…TVPK), 361 to 399 (KVVL…GCHQ), 402 to 440 (ESIL…DFAP), and 444 to 483 (KKFH…DCPK). Residues 333-383 (DEMEEDDFDSNAVAAESALDRLACGLGGKVVLPMTKEHIMQMLQSPDWKYR) are ran-GTP binding. Positions 806–842 (KAKLEGHFKNQELRQVKRQEENYDQQVEMSLQDEDEC) form a coiled coil. HEAT repeat units lie at residues 866 to 905 (LPWF…HCSP), 908 to 946 (FKYV…FGGD), and 949 to 987 (RSLC…IGKI).

It belongs to the importin beta family.

The protein localises to the cytoplasm. It is found in the nucleus. Functionally, may function in nuclear protein import as nuclear transport receptor. This is Ran-binding protein 6 (RANBP6) from Homo sapiens (Human).